The primary structure comprises 740 residues: METCYCIEPQWPADELLMKYQYISDFFIALAYFSIPLELIYFVKKSAVFPYRWVLVQFGAFIVLCGATHLINLWTFTMHSRTVAVVMTTAKVLTAVVSCATALMLVHIIPDLLSVKTRELFLKNKAAELDREMGLIRTQEETGRHVRMLTHEIRSTLDRHTILKTTLVELGRTLALEECALWMPTRTGLELQLSYTLHQQNPVGYTVPINLPVISQVFSSNRAVKISPNSPVASLRPRAGRYVAGEVVAVRVPLLHLSNFQINDWPELSTKRYALMVLMLPSDSARQWRVHELELVEVVADQVAVALSHAAILEESMRARDPLMEQNVALDLARREAETANHARNDFLAVMNHEMRTPMHAIIALSSLLQETELTPEQRLMVETILKSSNLLATLINDVLDLSRLEDGSLQLDIGTFNLHAVFKEVLNLIKPVTLVKKLSLTLHLGLDLPVFAVGDEKRLMQAILNVVGNAVKFSKEGSISISAIVAKAETFREIRVPDFHPVPSDSHFYLRVQVKDTGSGISPQDIPKLFTKFAQTTVGPRNSCGSGLGLAICKRFVNLMEGHIWLESEGLGKGCTATFIVKLGIAEQSNESKLPFTSKIHENSIHTSFPGLKVLVMDDNGVSRSVTKGLLVHLGCEVTTAGSIEEFLRVVSQEHKVVFMDICTPGVDGYELAIRIREKFAKCHERPFMVVLTGNSDKVTKESCLRAGMDGLILKPVSIDKMRSVLSELIERRVLFETS.

3 helical membrane passes run 23-43 (ISDFFIALAYFSIPLELIYFV), 53-73 (WVLVQFGAFIVLCGATHLINL), and 92-112 (VLTAVVSCATALMLVHIIPDL). Cu cation contacts are provided by Cys-65 and His-69. The 150-residue stretch at 158–307 (DRHTILKTTL…VVADQVAVAL (150 aa)) folds into the GAF domain. Residues 350–588 (VMNHEMRTPM…TFIVKLGIAE (239 aa)) form the Histidine kinase domain. His-353 is subject to Phosphohistidine; by autocatalysis. One can recognise a Response regulatory domain in the interval 614-731 (KVLVMDDNGV…KMRSVLSELI (118 aa)). Asp-662 is subject to 4-aspartylphosphate.

It belongs to the ethylene receptor family. In terms of assembly, homodimer; disulfide-linked. It depends on Cu cation as a cofactor. Activation probably requires a transfer of a phosphate group between a His in the transmitter domain and an Asp of the receiver domain.

Its subcellular location is the endoplasmic reticulum membrane. The enzyme catalyses ATP + protein L-histidine = ADP + protein N-phospho-L-histidine.. May act early in the ethylene signal transduction pathway, possibly as an ethylene receptor, or as a regulator of the pathway. The protein is Ethylene receptor 1 (ETR1) of Cucumis sativus (Cucumber).